The sequence spans 202 residues: MKALLLMSGGLDSSSAAYYYTRRGLDFDCLFINYGQRSARMQLRSSKIICEKLNKKLLVADIRKIRELFISDIWLKPHEPITHRNLVIIPIAIAFAKEKGYEEIIIASVKEDCEYEQNRIEIIKELKNLGEILKVKVSTPFAGMPKSFLLKLGVSAGLDPSLTYSCLLGHKYHCGQCSQCLKRKEAFKSANIQDPTKYLNLS.

7–17 contacts ATP; it reads MSGGLDSSSAA. Cys166, Cys174, Cys177, and Cys180 together coordinate Zn(2+).

This sequence belongs to the QueC family. Requires Zn(2+) as cofactor.

The catalysed reaction is 7-carboxy-7-deazaguanine + NH4(+) + ATP = 7-cyano-7-deazaguanine + ADP + phosphate + H2O + H(+). It participates in purine metabolism; 7-cyano-7-deazaguanine biosynthesis. Its function is as follows. Catalyzes the ATP-dependent conversion of 7-carboxy-7-deazaguanine (CDG) to 7-cyano-7-deazaguanine (preQ(0)). The sequence is that of 7-cyano-7-deazaguanine synthase 1 (queC1) from Sulfurisphaera tokodaii (strain DSM 16993 / JCM 10545 / NBRC 100140 / 7) (Sulfolobus tokodaii).